Reading from the N-terminus, the 316-residue chain is MKIISAEQVHQNLNFEELIPLLKQSFSRPFSMPQRQVYSLAPEQSENHDAFALLPSWNEEVIGNKAFTYFPDNAKKHDLPGLFSKIMLFKRQTGEPLALVDGTSVTYWRTAAISALASQLLSRKNSQHLMLFGTGNLASYLVKAHLTVRDIKQVTLWGRNAKKVSKLIADFSILYPAVTFKTSVDVNAEVASADIICCATGAKTPLFDGNSVSAGCHIDCLGNHMTDARECDTTTILRARVFVDSLTNTLNEAGELLIPMAEDAFNKDEIVGELADMCKTPSMLRQSSDEITLFKSVGTAISDLVAAHSVVEKLAD.

This sequence belongs to the ornithine cyclodeaminase/mu-crystallin family. In terms of assembly, homodimer.

It catalyses the reaction L-proline + NAD(+) = 1-pyrroline-2-carboxylate + NADH + H(+). The enzyme catalyses L-proline + NADP(+) = 1-pyrroline-2-carboxylate + NADPH + H(+). In terms of biological role, catalyzes the reduction of Delta(1)-pyrroline-2-carboxylate (Pyr2C) to L-proline, using preferentially NADPH over NADH as the electron donor. Together with LhpH, is involved in a metabolic pathway that converts trans-3-hydroxy-L-proline (t3LHyp) to L-proline. To a much lesser extent, can also reduce Delta(1)-piperideine-2-carboxylate (Pip2C) to L-pipecolate in vitro; however, this activity has likely no physiological significance in vivo since C.psychrerythraea probably possesses no ability to metabolize D-lysine via the L-pipecolate pathway. Does not show ornithine cyclodeaminase (OCD) activity. The chain is Delta(1)-pyrroline-2-carboxylate reductase from Colwellia psychrerythraea (strain 34H / ATCC BAA-681) (Vibrio psychroerythus).